The primary structure comprises 20 residues: 23 kDa cell wall protein (20 aa).

It localises to the secreted. It is found in the cell wall. This is 23 kDa cell wall protein from Arabidopsis thaliana (Mouse-ear cress).